The following is a 424-amino-acid chain: Delta(14)-sterol reductase erg24 (424 aa).

2 helical membrane passes run 19–39 (IGALGVTVLTTVVSFGSFYIC) and 112–132 (LILGVVCTSIYLLGASCMEFI). Residues K317, R321, L344, W349, and 356-357 (NY) contribute to the NADP(+) site. The helical transmembrane segment at 370-390 (PAGFGSPIPYFYVAYFGVLLV) threads the bilayer. NADP(+)-binding positions include D396, 400–404 (CRVKY), and Y411.

It belongs to the ERG4/ERG24 family.

The protein resides in the endoplasmic reticulum membrane. It carries out the reaction 4,4-dimethyl-5alpha-cholesta-8,24-dien-3beta-ol + NADP(+) = 4,4-dimethyl-5alpha-cholesta-8,14,24-trien-3beta-ol + NADPH + H(+). The protein operates within steroid biosynthesis; zymosterol biosynthesis; zymosterol from lanosterol: step 2/6. Its pathway is steroid metabolism; ergosterol biosynthesis. Functionally, delta(14)-sterol reductase; part of the third module of ergosterol biosynthesis pathway that includes by the late steps of the pathway. Erg24 reduces the C14=C15 double bond of 4,4-dimethyl-cholesta-8,14,24-trienol to produce 4,4-dimethyl-cholesta-8,24-dienol. The third module or late pathway involves the ergosterol synthesis itself through consecutive reactions that mainly occur in the endoplasmic reticulum (ER) membrane. Firstly, the squalene synthase erg9 catalyzes the condensation of 2 farnesyl pyrophosphate moieties to form squalene, which is the precursor of all steroids. Secondly, squalene is converted into lanosterol by the consecutive action of the squalene epoxidase erg1 and the lanosterol synthase erg7. The lanosterol 14-alpha-demethylase erg11/cyp1 catalyzes C14-demethylation of lanosterol to produce 4,4'-dimethyl cholesta-8,14,24-triene-3-beta-ol. In the next steps, a complex process involving various demethylation, reduction and desaturation reactions catalyzed by the C-14 reductase erg24 and the C-4 demethylation complex erg25-erg26-erg27 leads to the production of zymosterol. Erg28 likely functions in the C-4 demethylation complex reaction by tethering erg26 and Erg27 to the endoplasmic reticulum or to facilitate interaction between these proteins. Then, the sterol 24-C-methyltransferase erg6 catalyzes the methyl transfer from S-adenosyl-methionine to the C-24 of zymosterol to form fecosterol. The C-8 sterol isomerase erg2 catalyzes the reaction which results in unsaturation at C-7 in the B ring of sterols and thus converts fecosterol to episterol. The sterol-C5-desaturases erg31 and erg32 then catalyze the introduction of a C-5 double bond in the B ring to produce 5-dehydroepisterol. The C-22 sterol desaturase erg5 further converts 5-dehydroepisterol into ergosta-5,7,22,24(28)-tetraen-3beta-ol by forming the C-22(23) double bond in the sterol side chain. Finally, ergosta-5,7,22,24(28)-tetraen-3beta-ol is substrate of the C-24(28) sterol reductase erg4 to produce ergosterol. In the genus Schizosaccharomyces, a second route exists between lanosterol and fecosterol, via the methylation of lanosterol to eburicol by erg6, followed by C14-demethylation by erg11/cyp1 and C4-demethylation by the demethylation complex erg25-erg26-erg27. This Schizosaccharomyces pombe (strain 972 / ATCC 24843) (Fission yeast) protein is Delta(14)-sterol reductase erg24.